The chain runs to 509 residues: Dihydrolipoyl dehydrogenase, mitochondrial (509 aa).

The N-terminal 35 residues, 1-35, are a transit peptide targeting the mitochondrion; it reads MQSWSRVYRSLAKKGHFNRISHGLQGVSSVPLRTY. An N6-acetyllysine; alternate modification is found at lysine 66. An N6-succinyllysine; alternate modification is found at lysine 66. FAD is bound by residues 71-80 and lysine 89; that span reads EKNETLGGTC. Cysteine 80 and cysteine 85 form a disulfide bridge. An N6-acetyllysine; alternate mark is found at lysine 104, lysine 122, lysine 132, and lysine 143. Residues lysine 104, lysine 122, lysine 132, and lysine 143 each carry the N6-succinyllysine; alternate modification. An FAD-binding site is contributed by glycine 154. Lysine 159 and lysine 166 each carry N6-succinyllysine. FAD is bound at residue 183 to 185; that stretch reads TGS. Residues 220 to 227 and glutamate 243 each bind NAD(+); that span reads GAGVIGVE. N6-succinyllysine is present on residues lysine 273 and lysine 277. An NAD(+)-binding site is contributed by valine 278. A phosphoserine mark is found at serine 285 and serine 297. Position 314 (glycine 314) interacts with NAD(+). Position 334 is an N6-acetyllysine; alternate (lysine 334). The residue at position 334 (lysine 334) is an N6-succinyllysine; alternate. Lysine 346 is subject to N6-acetyllysine. Residues aspartate 355 and 361–364 each bind FAD; that span reads MLAH. Lysine 410 bears the N6-acetyllysine; alternate mark. Lysine 410 carries the N6-succinyllysine; alternate modification. N6-acetyllysine is present on residues lysine 417 and lysine 420. Lysine 430 is subject to N6-succinyllysine. Catalysis depends on histidine 487, which acts as the Proton acceptor. The residue at position 505 (lysine 505) is an N6-acetyllysine; alternate. Position 505 is an N6-succinyllysine; alternate (lysine 505).

It belongs to the class-I pyridine nucleotide-disulfide oxidoreductase family. As to quaternary structure, homodimer. Part of the multimeric pyruvate dehydrogenase complex that contains multiple copies of pyruvate dehydrogenase (subunits PDHA (PDHA1 or PDHA2) and PDHB, E1), dihydrolipoamide acetyltransferase (DLAT, E2) and lipoamide dehydrogenase (DLD, E3). These subunits are bound to an inner core composed of about 48 DLAT and 12 PDHX molecules (by non covalent bonds). The 2-oxoglutarate dehydrogenase complex is composed of OGDH (2-oxoglutarate dehydrogenase; E1), DLST (dihydrolipoamide succinyltransferase; E2), DLD (dihydrolipoamide dehydrogenase; E3) and the assembly factor KGD4. It contains multiple copies of the three enzymatic components (E1, E2 and E3). In the nucleus, the 2-oxoglutarate dehydrogenase complex associates with KAT2A. Interacts with PDHX. FAD is required as a cofactor. Post-translationally, tyrosine phosphorylated. In terms of tissue distribution, expressed in liver (at protein level).

It localises to the mitochondrion matrix. Its subcellular location is the nucleus. It is found in the cell projection. The protein resides in the cilium. The protein localises to the flagellum. It localises to the cytoplasmic vesicle. Its subcellular location is the secretory vesicle. It is found in the acrosome. The catalysed reaction is N(6)-[(R)-dihydrolipoyl]-L-lysyl-[protein] + NAD(+) = N(6)-[(R)-lipoyl]-L-lysyl-[protein] + NADH + H(+). Functionally, lipoamide dehydrogenase is a component of the glycine cleavage system as well as an E3 component of three alpha-ketoacid dehydrogenase complexes (pyruvate-, alpha-ketoglutarate-, and branched-chain amino acid-dehydrogenase complex). The 2-oxoglutarate dehydrogenase complex is mainly active in the mitochondrion. A fraction of the 2-oxoglutarate dehydrogenase complex also localizes in the nucleus and is required for lysine succinylation of histones: associates with KAT2A on chromatin and provides succinyl-CoA to histone succinyltransferase KAT2A. In monomeric form may have additional moonlighting function as serine protease. Involved in the hyperactivation of spermatazoa during capacitation and in the spermatazoal acrosome reaction. This is Dihydrolipoyl dehydrogenase, mitochondrial (Dld) from Mus musculus (Mouse).